Here is a 90-residue protein sequence, read N- to C-terminus: Small ribosomal subunit protein uS15c (90 aa).

The protein belongs to the universal ribosomal protein uS15 family. As to quaternary structure, part of the 30S ribosomal subunit.

The protein resides in the plastid. It is found in the chloroplast. The sequence is that of Small ribosomal subunit protein uS15c (rps15-A) from Zea mays (Maize).